The primary structure comprises 85 residues: Granaticin polyketide synthase acyl carrier protein (85 aa).

The Carrier domain maps to 3 to 81 (RLTLDGLRTI…VLLDLVNGAQ (79 aa)). The residue at position 41 (serine 41) is an O-(pantetheine 4'-phosphoryl)serine.

In terms of processing, 4'-phosphopantetheine is transferred from CoA to a specific serine of the apo-ACP-like protein.

Its pathway is antibiotic biosynthesis; granaticin biosynthesis. Functionally, acyl carrier protein. This is Granaticin polyketide synthase acyl carrier protein from Streptomyces violaceoruber.